Consider the following 312-residue polypeptide: DNA-directed RNA polymerase subunit alpha (312 aa).

Residues methionine 1–threonine 226 are alpha N-terminal domain (alpha-NTD). An alpha C-terminal domain (alpha-CTD) region spans residues asparagine 242–lysine 312.

Belongs to the RNA polymerase alpha chain family. In terms of assembly, homodimer. The RNAP catalytic core consists of 2 alpha, 1 beta, 1 beta' and 1 omega subunit. When a sigma factor is associated with the core the holoenzyme is formed, which can initiate transcription.

The enzyme catalyses RNA(n) + a ribonucleoside 5'-triphosphate = RNA(n+1) + diphosphate. DNA-dependent RNA polymerase catalyzes the transcription of DNA into RNA using the four ribonucleoside triphosphates as substrates. The polypeptide is DNA-directed RNA polymerase subunit alpha (Streptococcus agalactiae serotype Ia (strain ATCC 27591 / A909 / CDC SS700)).